The chain runs to 147 residues: Cytochrome c' (147 aa).

An N-terminal signal peptide occupies residues 1–21 (MKRMMIVAALAALTTTTVAQA). Residues Arg31, Thr87, Glu88, Cys137, Cys140, and His141 each contribute to the heme c site.

Homodimer. Binds 1 heme c group covalently per subunit.

Functionally, cytochrome c' is the most widely occurring bacterial c-type cytochrome. Cytochromes c' are high-spin proteins and the heme has no sixth ligand. Their exact function is not known. The chain is Cytochrome c' from Rhodospirillum rubrum (strain ATCC 11170 / ATH 1.1.1 / DSM 467 / LMG 4362 / NCIMB 8255 / S1).